A 147-amino-acid polypeptide reads, in one-letter code: 3-dehydroquinate dehydratase (147 aa).

Residue Tyr-22 is the Proton acceptor of the active site. Positions 76, 82, and 89 each coordinate substrate. Residue His-102 is the Proton donor of the active site. Substrate contacts are provided by residues 103 to 104 (IS) and Arg-113.

It belongs to the type-II 3-dehydroquinase family. As to quaternary structure, homododecamer.

It carries out the reaction 3-dehydroquinate = 3-dehydroshikimate + H2O. The protein operates within metabolic intermediate biosynthesis; chorismate biosynthesis; chorismate from D-erythrose 4-phosphate and phosphoenolpyruvate: step 3/7. Catalyzes a trans-dehydration via an enolate intermediate. The sequence is that of 3-dehydroquinate dehydratase from Fusobacterium nucleatum subsp. nucleatum (strain ATCC 25586 / DSM 15643 / BCRC 10681 / CIP 101130 / JCM 8532 / KCTC 2640 / LMG 13131 / VPI 4355).